The sequence spans 491 residues: UDP-N-acetylmuramate--L-alanine ligase (491 aa).

ATP is bound at residue glycine 126–threonine 132.

The protein belongs to the MurCDEF family.

It localises to the cytoplasm. It catalyses the reaction UDP-N-acetyl-alpha-D-muramate + L-alanine + ATP = UDP-N-acetyl-alpha-D-muramoyl-L-alanine + ADP + phosphate + H(+). Its pathway is cell wall biogenesis; peptidoglycan biosynthesis. Cell wall formation. This Shigella dysenteriae serotype 1 (strain Sd197) protein is UDP-N-acetylmuramate--L-alanine ligase.